Consider the following 49-residue polypeptide: U3-plectoxin-Pt1a (49 aa).

Intrachain disulfides connect Cys2/Cys16, Cys9/Cys30, Cys15/Cys41, Cys32/Cys39, and Cys45/Cys49.

As to expression, expressed by the venom gland.

Its subcellular location is the secreted. Its function is as follows. Potent toxin that may paralyze and/or kill insect pests such as H.virescens (lepidoptera), S.exigua (beet armyworm) and M.sexta (tobacco hornworm). This chain is U3-plectoxin-Pt1a, found in Plectreurys tristis (Spider).